We begin with the raw amino-acid sequence, 330 residues long: MSKNDDILLFSLSNSHQLANKIANLLKIELSPIRIDKFADGELIVAPQVPVRGRRVIIIQSTSKPVNDSLMELLIAIDSIKRASAKAISVVIPYYGYARQDRKAKPREPITARLVAKMIESAGATSVLTWDIHSLQTQGFFDIPFDSLEAVWVLMKHYFSAYKDSSNITIVSPDYGGVKRAREISIATGATLAIVDKRRSGKNQVEINNVLGDVKDRDCVIVDDMIDTGGTILGAAKIVREKGAKSITIIATHGLFNNNARQHFQQAIKDRIINKICIADTIENEPFDGLEIVSIAPAIAKCIEIYSEGTGSMSFVHDENSKVLFAKKIY.

Residues 40-42 (DGE) and 99-100 (RQ) each bind ATP. Mg(2+) is bound by residues His133 and Asp174. Lys197 is a catalytic residue. Residues Arg199, Asp223, and 227–231 (DTGGT) each bind D-ribose 5-phosphate.

This sequence belongs to the ribose-phosphate pyrophosphokinase family. Class I subfamily. Homohexamer. Requires Mg(2+) as cofactor.

The protein resides in the cytoplasm. It catalyses the reaction D-ribose 5-phosphate + ATP = 5-phospho-alpha-D-ribose 1-diphosphate + AMP + H(+). It functions in the pathway metabolic intermediate biosynthesis; 5-phospho-alpha-D-ribose 1-diphosphate biosynthesis; 5-phospho-alpha-D-ribose 1-diphosphate from D-ribose 5-phosphate (route I): step 1/1. Functionally, involved in the biosynthesis of the central metabolite phospho-alpha-D-ribosyl-1-pyrophosphate (PRPP) via the transfer of pyrophosphoryl group from ATP to 1-hydroxyl of ribose-5-phosphate (Rib-5-P). In Ureaplasma parvum serovar 3 (strain ATCC 700970), this protein is Ribose-phosphate pyrophosphokinase.